We begin with the raw amino-acid sequence, 155 residues long: Large ribosomal subunit protein uL22 (155 aa).

It belongs to the universal ribosomal protein uL22 family. As to quaternary structure, part of the 50S ribosomal subunit.

This protein binds specifically to 23S rRNA. It makes multiple contacts with different domains of the 23S rRNA in the assembled 50S subunit and ribosome. Its function is as follows. The globular domain of the protein is located near the polypeptide exit tunnel on the outside of the subunit, while an extended beta-hairpin is found that lines the wall of the exit tunnel in the center of the 70S ribosome. This is Large ribosomal subunit protein uL22 from Pyrococcus furiosus (strain ATCC 43587 / DSM 3638 / JCM 8422 / Vc1).